The following is a 261-amino-acid chain: Carnitinyl-CoA dehydratase (261 aa).

Catalysis depends on Glu111, which acts as the Nucleophile. Glu131 (proton acceptor) is an active-site residue.

This sequence belongs to the enoyl-CoA hydratase/isomerase family.

The catalysed reaction is (R)-carnitinyl-CoA = crotonobetainyl-CoA + H2O. The protein operates within amine and polyamine metabolism; carnitine metabolism. Catalyzes the reversible dehydration of L-carnitinyl-CoA to crotonobetainyl-CoA. This is Carnitinyl-CoA dehydratase from Salmonella dublin (strain CT_02021853).